We begin with the raw amino-acid sequence, 368 residues long: Lipoyl synthase, chloroplastic (368 aa).

2 disordered regions span residues 1–30 and 42–61; these read MQSS…RGSV and PTVG…RDPE. Cysteine 94, cysteine 99, cysteine 105, cysteine 131, cysteine 135, cysteine 138, and serine 346 together coordinate [4Fe-4S] cluster. The 222-residue stretch at 114–335 folds into the Radical SAM core domain; the sequence is GEGDGIATAT…KEYGESVGFR (222 aa).

Belongs to the radical SAM superfamily. Lipoyl synthase family. Requires [4Fe-4S] cluster as cofactor.

The protein resides in the plastid. It localises to the chloroplast. The enzyme catalyses [[Fe-S] cluster scaffold protein carrying a second [4Fe-4S](2+) cluster] + N(6)-octanoyl-L-lysyl-[protein] + 2 oxidized [2Fe-2S]-[ferredoxin] + 2 S-adenosyl-L-methionine + 4 H(+) = [[Fe-S] cluster scaffold protein] + N(6)-[(R)-dihydrolipoyl]-L-lysyl-[protein] + 4 Fe(3+) + 2 hydrogen sulfide + 2 5'-deoxyadenosine + 2 L-methionine + 2 reduced [2Fe-2S]-[ferredoxin]. Its pathway is protein modification; protein lipoylation via endogenous pathway; protein N(6)-(lipoyl)lysine from octanoyl-[acyl-carrier-protein]: step 2/2. In terms of biological role, catalyzes the radical-mediated insertion of two sulfur atoms into the C-6 and C-8 positions of the octanoyl moiety bound to the lipoyl domains of lipoate-dependent enzymes, thereby converting the octanoylated domains into lipoylated derivatives. The sequence is that of Lipoyl synthase, chloroplastic from Sorghum bicolor (Sorghum).